The sequence spans 115 residues: Large ribosomal subunit protein bL19 (115 aa).

The protein belongs to the bacterial ribosomal protein bL19 family.

This protein is located at the 30S-50S ribosomal subunit interface and may play a role in the structure and function of the aminoacyl-tRNA binding site. In Buchnera aphidicola subsp. Acyrthosiphon pisum (strain Tuc7), this protein is Large ribosomal subunit protein bL19.